Reading from the N-terminus, the 336-residue chain is Holliday junction branch migration complex subunit RuvB (336 aa).

A large ATPase domain (RuvB-L) region spans residues 4-184 (SDRLISSQSI…FGIVQRLEYY (181 aa)). ATP contacts are provided by residues Ile23, Arg24, Gly65, Lys68, Thr69, Thr70, 131-133 (EDY), Arg174, Tyr184, and Arg221. Thr69 is a Mg(2+) binding site. The interval 185–255 (SVDSLTKIVA…MAQQALEMLE (71 aa)) is small ATPAse domain (RuvB-S). The segment at 258 to 336 (QHGFDLMDRK…HFGFSAIEQE (79 aa)) is head domain (RuvB-H). DNA contacts are provided by Arg313 and Arg318.

Belongs to the RuvB family. In terms of assembly, homohexamer. Forms an RuvA(8)-RuvB(12)-Holliday junction (HJ) complex. HJ DNA is sandwiched between 2 RuvA tetramers; dsDNA enters through RuvA and exits via RuvB. An RuvB hexamer assembles on each DNA strand where it exits the tetramer. Each RuvB hexamer is contacted by two RuvA subunits (via domain III) on 2 adjacent RuvB subunits; this complex drives branch migration. In the full resolvosome a probable DNA-RuvA(4)-RuvB(12)-RuvC(2) complex forms which resolves the HJ.

The protein resides in the cytoplasm. The enzyme catalyses ATP + H2O = ADP + phosphate + H(+). In terms of biological role, the RuvA-RuvB-RuvC complex processes Holliday junction (HJ) DNA during genetic recombination and DNA repair, while the RuvA-RuvB complex plays an important role in the rescue of blocked DNA replication forks via replication fork reversal (RFR). RuvA specifically binds to HJ cruciform DNA, conferring on it an open structure. The RuvB hexamer acts as an ATP-dependent pump, pulling dsDNA into and through the RuvAB complex. RuvB forms 2 homohexamers on either side of HJ DNA bound by 1 or 2 RuvA tetramers; 4 subunits per hexamer contact DNA at a time. Coordinated motions by a converter formed by DNA-disengaged RuvB subunits stimulates ATP hydrolysis and nucleotide exchange. Immobilization of the converter enables RuvB to convert the ATP-contained energy into a lever motion, pulling 2 nucleotides of DNA out of the RuvA tetramer per ATP hydrolyzed, thus driving DNA branch migration. The RuvB motors rotate together with the DNA substrate, which together with the progressing nucleotide cycle form the mechanistic basis for DNA recombination by continuous HJ branch migration. Branch migration allows RuvC to scan DNA until it finds its consensus sequence, where it cleaves and resolves cruciform DNA. The sequence is that of Holliday junction branch migration complex subunit RuvB from Legionella pneumophila (strain Paris).